The primary structure comprises 380 residues: cAMP-dependent protein kinase type I-alpha regulatory subunit (380 aa).

Met-1 bears the N-acetylmethionine mark. An N-acetylalanine; in cAMP-dependent protein kinase type I-alpha regulatory subunit, N-terminally processed modification is found at Ala-2. Residues 2–135 (ASGSTASEEE…ALAKAIEKNV (134 aa)) are dimerization and phosphorylation. Phosphoserine occurs at positions 3, 76, and 82. Residues 64-96 (IQNLQKASARADSREDEISPPPPNPVVKGRRRR) are disordered. Residues 95–99 (RRGAI) carry the Pseudophosphorylation motif motif. At Ser-100 the chain carries Phosphoserine. Residues 136–253 (LFSH…SKVS), Glu-201, Arg-210, 254–380 (ILES…SLSV), Glu-325, and Arg-334 contribute to the 3',5'-cyclic AMP site. Ser-257 is subject to Phosphoserine.

Belongs to the cAMP-dependent kinase regulatory chain family. In terms of assembly, the inactive holoenzyme is composed of two regulatory chains and two catalytic chains. Activation by cAMP releases the two active catalytic monomers and the regulatory dimer. Interacts with PRKACA and PRKACB. PRKAR1A also interacts with RFC2; the complex may be involved in cell survival. Interacts with AKAP4. Interacts with RARA; the interaction occurs in the presence of cAMP or FSH and regulates RARA transcriptional activity. Interacts with the phosphorylated form of PJA2. Interacts with CBFA2T3. Interacts with PRKX; regulates this cAMP-dependent protein kinase. Interacts with smAKAP; this interaction may target PRKAR1A to the plasma membrane. Interacts with AICDA. Post-translationally, the pseudophosphorylation site binds to the substrate-binding region of the catalytic chain, resulting in the inhibition of its activity. As to expression, four types of regulatory chains are found: I-alpha, I-beta, II-alpha, and II-beta. Their expression varies among tissues and is in some cases constitutive and in others inducible.

Its subcellular location is the cell membrane. In terms of biological role, regulatory subunit of the cAMP-dependent protein kinases involved in cAMP signaling in cells. This is cAMP-dependent protein kinase type I-alpha regulatory subunit (PRKAR1A) from Sus scrofa (Pig).